The chain runs to 431 residues: 5-methylthioadenosine/S-adenosylhomocysteine deaminase (431 aa).

Zn(2+)-binding residues include His63 and His65. Substrate-binding residues include Glu92, Arg144, and His184. His211 contacts Zn(2+). Substrate is bound by residues Glu214 and Asp299. Asp299 serves as a coordination point for Zn(2+).

The protein belongs to the metallo-dependent hydrolases superfamily. MTA/SAH deaminase family. Zn(2+) is required as a cofactor.

The catalysed reaction is S-adenosyl-L-homocysteine + H2O + H(+) = S-inosyl-L-homocysteine + NH4(+). It catalyses the reaction S-methyl-5'-thioadenosine + H2O + H(+) = S-methyl-5'-thioinosine + NH4(+). Catalyzes the deamination of 5-methylthioadenosine and S-adenosyl-L-homocysteine into 5-methylthioinosine and S-inosyl-L-homocysteine, respectively. Is also able to deaminate adenosine. This Thermoanaerobacter pseudethanolicus (strain ATCC 33223 / 39E) (Clostridium thermohydrosulfuricum) protein is 5-methylthioadenosine/S-adenosylhomocysteine deaminase.